The chain runs to 230 residues: MKKAVVLLSGGMDSAVVTAIAQSQGFMVHALSIRYGQRHTSELDAAVRIARVLNVAAHKVVDVDLRSIGGSALTDDIEIPDAGGKGIPVTYVPARNTIMLSLALGWAEVIGAADIFCGVNAVDYSGYPDCRPQFITAFETLANLATKVGVEGTQLHVHAPLQFLSKAEIVHEGVLHGVDFGLTVSCYRADVDGRACGRCDACKLRAAGFADAGVADPTRYMELPCSLLLL.

Residue 8–18 (LSGGMDSAVVT) participates in ATP binding. Positions 186, 196, 199, and 202 each coordinate Zn(2+).

The protein belongs to the QueC family. The cofactor is Zn(2+).

The catalysed reaction is 7-carboxy-7-deazaguanine + NH4(+) + ATP = 7-cyano-7-deazaguanine + ADP + phosphate + H2O + H(+). It functions in the pathway purine metabolism; 7-cyano-7-deazaguanine biosynthesis. Functionally, catalyzes the ATP-dependent conversion of 7-carboxy-7-deazaguanine (CDG) to 7-cyano-7-deazaguanine (preQ(0)). This chain is 7-cyano-7-deazaguanine synthase, found in Xylella fastidiosa (strain 9a5c).